Here is a 204-residue protein sequence, read N- to C-terminus: N-(5'-phosphoribosyl)anthranilate isomerase (204 aa).

This sequence belongs to the TrpF family.

It catalyses the reaction N-(5-phospho-beta-D-ribosyl)anthranilate = 1-(2-carboxyphenylamino)-1-deoxy-D-ribulose 5-phosphate. It participates in amino-acid biosynthesis; L-tryptophan biosynthesis; L-tryptophan from chorismate: step 3/5. The protein is N-(5'-phosphoribosyl)anthranilate isomerase of Bacillus thuringiensis (strain Al Hakam).